Reading from the N-terminus, the 403-residue chain is Serine/threonine transporter SstT (403 aa).

A run of 10 helical transmembrane segments spans residues 15-35, 49-69, 85-105, 142-162, 183-203, 218-238, 246-268, 289-309, 317-337, and 362-382; these read LGLI…AIVW, FISA…MTAI, LLYV…SFIF, ALLN…GMML, IVQL…AGTL, LAVI…LIVF, YPLV…SSAA, ISIP…ISVI, LGIG…SLAA, and PDVA…QDAT.

It belongs to the dicarboxylate/amino acid:cation symporter (DAACS) (TC 2.A.23) family.

The protein resides in the cell inner membrane. It carries out the reaction L-serine(in) + Na(+)(in) = L-serine(out) + Na(+)(out). It catalyses the reaction L-threonine(in) + Na(+)(in) = L-threonine(out) + Na(+)(out). Involved in the import of serine and threonine into the cell, with the concomitant import of sodium (symport system). This Chromohalobacter salexigens (strain ATCC BAA-138 / DSM 3043 / CIP 106854 / NCIMB 13768 / 1H11) protein is Serine/threonine transporter SstT.